An 81-amino-acid chain; its full sequence is Exodeoxyribonuclease 7 small subunit (81 aa).

It belongs to the XseB family. Heterooligomer composed of large and small subunits.

Its subcellular location is the cytoplasm. It carries out the reaction Exonucleolytic cleavage in either 5'- to 3'- or 3'- to 5'-direction to yield nucleoside 5'-phosphates.. Functionally, bidirectionally degrades single-stranded DNA into large acid-insoluble oligonucleotides, which are then degraded further into small acid-soluble oligonucleotides. This chain is Exodeoxyribonuclease 7 small subunit, found in Pasteurella multocida (strain Pm70).